The sequence spans 393 residues: MFKDYSREKFAKENFPDLSKHNNVMASHLTYELYEKYWDKVTPNGVTLDKCIQTGVDNPGNKFYGKKTGCVFGDEHSYETFKDFFDRVIEEIHHFKPEDVHPATDLDETKLVGGVFDEKYVKSCRIRCGRSVRGVCLPPAMSRAERRLVEKVVSNALGGLKEDLAGKYFPLTTMNDKDMEALIEDHFLFEKPTGALLTTSGCARDWPDGRGIWHNNGKNFLVWINEEDHIRIISMQKGGDMRAVFSRFGRGLTEVERLMKEKGYELMRNERLGYICTCPTNLGTVVRASVHLRLANLEKDKRFDDFLAKLRLGKRGTGGESSLAEDSTYDISNLARLGKSERELVQVLVDGVNVLIEADKRLEAGKPIDDLTPRLNSSTGTSISATASRHMTL.

Residues 7-94 enclose the Phosphagen kinase N-terminal domain; sequence REKFAKENFP…FDRVIEEIHH (88 aa). Residues 120 to 362 form the Phosphagen kinase C-terminal domain; that stretch reads YVKSCRIRCG…NVLIEADKRL (243 aa). Residues 123-127, histidine 186, arginine 231, 287-291, 315-320, and aspartate 330 contribute to the ATP site; these read SCRIR, RASVH, and RGTGGE. A disordered region spans residues 367–393; the sequence is PIDDLTPRLNSSTGTSISATASRHMTL. Positions 377–393 are enriched in low complexity; the sequence is SSTGTSISATASRHMTL.

The protein belongs to the ATP:guanido phosphotransferase family. As to quaternary structure, monomer.

It carries out the reaction guanidinoacetate + ATP = phosphoguanidinoacetate + ADP + H(+). The chain is Glycocyamine kinase from Hediste diversicolor (Sandworm).